We begin with the raw amino-acid sequence, 239 residues long: uncharacterized protein (239 aa).

The next 7 helical transmembrane spans lie at 20 to 40, 48 to 68, 80 to 100, 106 to 126, 143 to 163, 164 to 184, and 192 to 212; these read ILIW…WLVL, FSSV…LGLL, WILL…GFHF, IYAM…TYLF, LILL…EILV, MIAG…DILH, and IPGA…VLYF.

This sequence belongs to the cytomegalovirus US12 family.

It localises to the membrane. This is an uncharacterized protein from Homo sapiens (Human).